A 448-amino-acid chain; its full sequence is MAKRGRKPKELVPGPGSIDPSDVPKLEGASVPVMSTSYDVVVDREFDELLQGKDGLLVYHKMLSDGTVKNALNYIFGRIRSAKWYVEPASTDPEDIAIAAFIHAQLGIDDASVGKYPFGRLFAIYENAYIYGMAAGEIVLTLGADGKLILDKIVPIHPFNIDEVLYDEEGGPKALKLSGEVKGGSQFVNGLEIPIWKTVVFLHNDDGSFTGQSALRAAVPHWLAKRALILLINHGLERFMIGVPTLTIPKSVRQGTKQWEAAKEIVKNFVQKPRHGIILPDDWKFDTVDLKSAMPDAIPYLTYHDAGIARALGIDFNTVQLNMGVQAVNIGEFVSLTQQTIISLQREFASAVNLYLIPKLVLPNWPGATRFPRLTFEMEERNDFSAAANLMGMLINAVKDSEDIPTELKALIDALPSKMRRALGVVDEVREAVRQPADSRYLYTRRRR.

The segment at 1–25 (MAKRGRKPKELVPGPGSIDPSDVPK) is disordered.

The protein belongs to the P23virus portal protein family. In terms of assembly, homododecamer. Interacts with the capsid protein. Interacts with the terminase large subunit; this interaction allows the packaging of viral DNA.

Its subcellular location is the virion. Forms the portal vertex of the capsid. This portal plays critical roles in head assembly, genome packaging, neck/tail attachment, and genome ejection. The portal protein multimerizes as a single ring-shaped homododecamer arranged around a central channel. Forms the portal vertex of the capsid. This portal plays critical roles in head assembly, genome packaging, neck/tail attachment, and genome ejection. In Thermus thermophilus (Thermus thermophilus phage P23-45), this protein is Portal protein.